A 706-amino-acid chain; its full sequence is MATANFGKIQIGIYVEIKRSDGRIHQAMVTSLNEDNESVTVEWIENGDTKGKEIDLESIFSLNPDLVPDEEIEPSPETPPPPASSAKVNKIVKNRRTVASIKNDPPSRDNRVVGSARARPSQFPEQSSSAQQNGSVSDISPVQAAKKEFGPPSRRKSNCVKEVEKLQEKREKRRLQQQELREKRAQDVDATNPNYEIMCMIRDFRGSLDYRPLTTADPIDEHRICVCVRKRPLNKKETQMKDLDVITIPSKDVVMVHEPKQKVDLTRYLENQTFRFDYAFDDSAPNEMVYRFTARPLVETIFERGMATCFAYGQTGSGKTHTMGGDFSGKNQDCSKGIYALAARDVFLMLKKPNYKKLELQVYATFFEIYSGKVFDLLNRKTKLRVLEDGKQQVQVVGLQEREVKCVEDVLKLIDIGNSCRTSGQTSANAHSSRSHAVFQIILRRKGKLHGKFSLIDLAGNERGADTSSADRQTRLEGAEINKSLLALKECIRALGRNKPHTPFRASKLTQVLRDSFIGENSRTCMIATISPGMASCENTLNTLRYANRVKELTVDPTAAGDVRPIMHHPPNQIDDLETQWGVGSSPQRDDLKLLCEQNEEEVSPQLFTFHEAVSQMVEMEEQVVEDHRAVFQESIRWLEDEKALLEMTEEVDYDVDSYATQLEAILEQKIDILTELRDKVKSFRAALQEEEQASKQINPKRPRAL.

A globular region spans residues 1–217 (MATANFGKIQ…LDYRPLTTAD (217 aa)). The tract at residues 66 to 139 (LVPDEEIEPS…AQQNGSVSDI (74 aa)) is disordered. Phosphoserine is present on Ser75. Phosphothreonine occurs at positions 78 and 97. Residue Ser100 is modified to Phosphoserine. At Lys102 the chain carries N6-acetyllysine. The span at 123 to 139 (FPEQSSSAQQNGSVSDI) shows a compositional bias: polar residues. A phosphoserine mark is found at Ser135 and Ser140. The tract at residues 165–186 (KLQEKREKRRLQQQELREKRAQ) is disordered. The Kinesin motor domain occupies 223–553 (RICVCVRKRP…LRYANRVKEL (331 aa)). 313-320 (GQTGSGKT) is a binding site for ATP. 2 positions are modified to phosphoserine: Asp556 and Gln573. Residues 660–699 (ATQLEAILEQKIDILTELRDKVKSFRAALQEEEQASKQIN) are a coiled coil.

The protein belongs to the TRAFAC class myosin-kinesin ATPase superfamily. Kinesin family. MCAK/KIF2 subfamily. As to quaternary structure, interacts with AURKA and PLK1. Interacts with PSRC1. Interacts with MCRS1; the interaction enhances recruitment of KIF2A to the minus ends of spindle microtubules which promotes chromosome alignment.

It localises to the cytoplasm. Its subcellular location is the cytoskeleton. The protein resides in the microtubule organizing center. It is found in the centrosome. The protein localises to the spindle pole. It localises to the spindle. Plus end-directed microtubule-dependent motor required for normal brain development. May regulate microtubule dynamics during axonal growth. Required for normal progression through mitosis. Required for normal congress of chromosomes at the metaphase plate. Required for normal spindle dynamics during mitosis. Promotes spindle turnover. Implicated in formation of bipolar mitotic spindles. Has microtubule depolymerization activity. The protein is Kinesin-like protein KIF2A (KIF2A) of Homo sapiens (Human).